The sequence spans 211 residues: Protein-L-isoaspartate O-methyltransferase (211 aa).

Ser-60 is a catalytic residue.

It belongs to the methyltransferase superfamily. L-isoaspartyl/D-aspartyl protein methyltransferase family.

It is found in the cytoplasm. The enzyme catalyses [protein]-L-isoaspartate + S-adenosyl-L-methionine = [protein]-L-isoaspartate alpha-methyl ester + S-adenosyl-L-homocysteine. Functionally, catalyzes the methyl esterification of L-isoaspartyl residues in peptides and proteins that result from spontaneous decomposition of normal L-aspartyl and L-asparaginyl residues. It plays a role in the repair and/or degradation of damaged proteins. In Pseudomonas fluorescens (strain ATCC BAA-477 / NRRL B-23932 / Pf-5), this protein is Protein-L-isoaspartate O-methyltransferase.